The following is a 70-amino-acid chain: Protein SlyX homolog (70 aa).

This sequence belongs to the SlyX family.

The chain is Protein SlyX homolog from Nitrobacter winogradskyi (strain ATCC 25391 / DSM 10237 / CIP 104748 / NCIMB 11846 / Nb-255).